Consider the following 152-residue polypeptide: Ribosome maturation factor RimP (152 aa).

Belongs to the RimP family.

The protein localises to the cytoplasm. Functionally, required for maturation of 30S ribosomal subunits. The protein is Ribosome maturation factor RimP of Burkholderia multivorans (strain ATCC 17616 / 249).